Reading from the N-terminus, the 150-residue chain is Actin-depolymerizing factor 3 (150 aa).

The ADF-H domain occupies 7-150 (GVAVSEECKA…TLDVLKDHTS (144 aa)).

This sequence belongs to the actin-binding proteins ADF family.

In terms of biological role, actin-depolymerizing protein. Severs actin filaments (F-actin) and binds to actin monomers. In Oryza sativa subsp. japonica (Rice), this protein is Actin-depolymerizing factor 3 (ADF3).